The sequence spans 352 residues: Ketoisovalerate oxidoreductase subunit VorB (352 aa).

As to quaternary structure, heterotrimer of the VorA, VorB and VorC subunits.

The catalysed reaction is 3-methyl-2-oxobutanoate + 2 oxidized [2Fe-2S]-[ferredoxin] + CoA = 2-methylpropanoyl-CoA + 2 reduced [2Fe-2S]-[ferredoxin] + CO2 + H(+). In Methanothermobacter marburgensis (strain ATCC BAA-927 / DSM 2133 / JCM 14651 / NBRC 100331 / OCM 82 / Marburg) (Methanobacterium thermoautotrophicum), this protein is Ketoisovalerate oxidoreductase subunit VorB (vorB).